A 275-amino-acid chain; its full sequence is Transcription factor JUNGBRUNNEN 1 (275 aa).

The tract at residues Met1–Phe24 is disordered. Residues Pro18–Arg167 form the NAC domain. The DNA-binding element occupies Val115–Asn173. A disordered region spans residues Cys191–Pro219. Basic and acidic residues predominate over residues Asp198 to Ser211.

In terms of tissue distribution, expressed in roots, root caps, cotyledons, tips and margin of young leaves, senescent regions of fully expanded leaves and floral tissues, including old sepals, petals, staments, mature anthers and pollen grains. Not detected in the abscission zone of open flowers, emerging lateral roots and root meristematic zones.

It localises to the nucleus. Its function is as follows. Transcription factor that binds to the 5'- RRYGCCGT-3' consensus core sequence. Central longevity regulator. Negative regulator of leaf senescence. Modulates cellular H(2)O(2) levels and enhances tolerance to various abiotic stresses through the regulation of DREB2A. The sequence is that of Transcription factor JUNGBRUNNEN 1 (JUB1) from Arabidopsis thaliana (Mouse-ear cress).